A 157-amino-acid polypeptide reads, in one-letter code: Rieske domain-containing protein (157 aa).

Methionine 1 is subject to N-acetylmethionine. Serine 6 is modified (phosphoserine). Rieske domains are found at residues 16–94 and 17–131; these read SSVC…TGEG and SVCV…NIYV. [2Fe-2S] cluster-binding residues include cysteine 57, histidine 59, cysteine 80, and histidine 83.

The cofactor is [2Fe-2S] cluster.

The protein is Rieske domain-containing protein (RFESD) of Homo sapiens (Human).